The following is a 73-amino-acid chain: UPF0352 protein HD_1515 (73 aa).

The protein belongs to the UPF0352 family.

This Haemophilus ducreyi (strain 35000HP / ATCC 700724) protein is UPF0352 protein HD_1515.